The primary structure comprises 305 residues: tRNA dimethylallyltransferase (305 aa).

8-15 (GPTAVGKT) provides a ligand contact to ATP. Substrate is bound at residue 10-15 (TAVGKT). The tract at residues 33-36 (DSRQ) is interaction with substrate tRNA.

Belongs to the IPP transferase family. In terms of assembly, monomer. Mg(2+) is required as a cofactor.

It catalyses the reaction adenosine(37) in tRNA + dimethylallyl diphosphate = N(6)-dimethylallyladenosine(37) in tRNA + diphosphate. In terms of biological role, catalyzes the transfer of a dimethylallyl group onto the adenine at position 37 in tRNAs that read codons beginning with uridine, leading to the formation of N6-(dimethylallyl)adenosine (i(6)A). This is tRNA dimethylallyltransferase from Thermotoga maritima (strain ATCC 43589 / DSM 3109 / JCM 10099 / NBRC 100826 / MSB8).